A 167-amino-acid polypeptide reads, in one-letter code: Insertion element IS1 4 protein InsB (167 aa).

The protein belongs to the transposase 27 family.

Its function is as follows. Absolutely required for transposition of IS1. This chain is Insertion element IS1 4 protein InsB (insB4), found in Escherichia coli (strain K12).